We begin with the raw amino-acid sequence, 1319 residues long: MDSTSKRSSFKRARGGRATVYFYVPTWQHGPGGQPPVSSFAFSLVNEVGFGVLFDYGCAGTGGATAGRAAAAVDPGVASEAFMEILRTVLPGHRVGAVSELPAGLGSYLTSGDDGAGGPCTLSRDVAPMMQALLEHLIRGQQQLRRPLVGDAGEGAGRGPGEGEATTPIPKILAVSFFHTLWSLHSIKQHHAYMLCNQLSSPASFCRTPGYLGFTPLGDPGERPDLKFARVPVPALAHPKADALAKLPEMFREHDSDVLTGTHRGAIKIRNPFNGLLGYLCRLYAPTSRVFIDRDVFSSNGKPDYFGVVYQVGGISTGASELDLLYSEAGTFGWGNVLGLHLGVVGSGEDPFALQEYLESHMLAQRCSGAPTLLGFVRVMDGSAAPPGMGPASRPHSFTGATRASIISPKACLSPVRGGGASVFMLGDFFQRPQRAGGAYASHDSGRRLASILAAVQTFINVAGGRAVLSTCQSRLEGTMHAKIAAACGVMGLKTYTSLLPEEAVSELSHFSPGNASMNRSILLSKFLNVEAQVVLLTVVNTPRNRQILEGVFKTFGCRVSLLGHLARAKKIVLYDDRSPDYCQGGPRYLCFKMHKPRYALPIDRWCGTASYRPTAPSRVPYNSSDAGPPSDAREVLLGILRHPTVGCKNYIVKHVDRCASGRVAQQCGVGPLDLPVADYSMVVVEPSAGPPSSMEPWTWETPQVPDDCFLIHEDGVSGVCSALGEKNSVFPFYPEAGAKMAIAESVLSLALAPIARIEDVTVNLSLAWPHLKGAQGEVFTLLTRCKRFCEDAGVSCNVTSCASSRRAGGGDPPEGGADIKSFVASAFAYTPCAFWKLTPDLKEARSVILFLPASPGKHAFASVYQQVRGQKKYTGSPVNISGAYLGKLARAVLHLRAKRLAVSGHDVGDGGLWAALAEMAMAGMRSLDVEVPVRLDGDPMGFLTSETPGVALEVPLSSASAAVEYLRSKYILCYRVGVTGHKTCERMFRITRGDQVLLECEQEEVGEAWRSHSVRMERYGPCFNRHAYGEGPYEREREAFLAYTPFRILNRPNKKHRVAVLLLPGCPYPLAALDALRDSGFDALAVSHLDLAHVLTDEVCGLFVAGVDNTSDTKTSDALTSALVHSRNPGVIRDFLSRKDTFSLGVGSMACRILFDGDMAVSPALQSRDIRCVPAVSCKFESRWLNVFINQSTPAVAFRTLRGSLLPCWAQGTHLGFGAPSPECLDRLVASGQAASMFYGSDVASGPAMAYPANPTETLPVAGICSRDGRHLVLLHDITASYYLWQWPHVPKSNIPIAVSPWKQVFYDLHAWVTAHSH.

It localises to the virion tegument. This is Probable membrane antigen 3 (3) from Equine herpesvirus 2 (strain 86/87) (EHV-2).